The chain runs to 231 residues: Lipoprotein-releasing system ATP-binding protein LolD (231 aa).

The 226-residue stretch at 6-231 (LKCQSVHKVY…VLAKVAPNSL (226 aa)) folds into the ABC transporter domain. ATP is bound at residue 42 to 49 (GASGSGKS).

It belongs to the ABC transporter superfamily. Lipoprotein translocase (TC 3.A.1.125) family. As to quaternary structure, the complex is composed of two ATP-binding proteins (LolD) and two transmembrane proteins (LolC and LolE).

The protein localises to the cell inner membrane. Part of the ABC transporter complex LolCDE involved in the translocation of mature outer membrane-directed lipoproteins, from the inner membrane to the periplasmic chaperone, LolA. Responsible for the formation of the LolA-lipoprotein complex in an ATP-dependent manner. The chain is Lipoprotein-releasing system ATP-binding protein LolD from Hahella chejuensis (strain KCTC 2396).